Reading from the N-terminus, the 115-residue chain is MNMLMALMVNITLSILLITVAFWLPQLNMYTEKANPYECGFDPMSSARLPFSMKFFLVAITFLLYDLEIALLLPLPWAIQMYNTNTMMLTAFILVSVLALGLAYEWTQKGLEWTE.

Helical transmembrane passes span 4–24, 55–75, and 86–106; these read LMAL…AFWL, FFLV…LLPL, and TMML…AYEW.

This sequence belongs to the complex I subunit 3 family. As to quaternary structure, core subunit of respiratory chain NADH dehydrogenase (Complex I) which is composed of 45 different subunits. Interacts with TMEM186. Interacts with TMEM242.

The protein localises to the mitochondrion inner membrane. It carries out the reaction a ubiquinone + NADH + 5 H(+)(in) = a ubiquinol + NAD(+) + 4 H(+)(out). Functionally, core subunit of the mitochondrial membrane respiratory chain NADH dehydrogenase (Complex I) which catalyzes electron transfer from NADH through the respiratory chain, using ubiquinone as an electron acceptor. Essential for the catalytic activity of complex I. The protein is NADH-ubiquinone oxidoreductase chain 3 of Peromyscus gossypinus (Cotton deermouse).